The chain runs to 571 residues: Protein E6 homolog (571 aa).

This sequence belongs to the chordopoxvirinae E6 family.

The protein localises to the virion. Functionally, late protein which may play a role in the virion morphogenesis and have therefore an indirect role on viral transcription ability. This Vertebrata (FPV) protein is Protein E6 homolog.